A 1018-amino-acid chain; its full sequence is Putative type I restriction enzyme MjaVIIIP endonuclease subunit (1018 aa).

The protein belongs to the HsdR family. As to quaternary structure, the type I restriction/modification system is composed of three polypeptides R, M and S.

It catalyses the reaction Endonucleolytic cleavage of DNA to give random double-stranded fragments with terminal 5'-phosphates, ATP is simultaneously hydrolyzed.. Its function is as follows. The restriction (R) subunit of a type I restriction enzyme that recognizes 5'-GAYN(5)GTAA-3' and cleaves a random distance away. The R subunit is required for both endonuclease and ATPase activities but not for modification. After locating a non-methylated recognition site, the enzyme complex serves as a molecular motor that translocates DNA in an ATP-dependent manner until a collision occurs that triggers cleavage. This chain is Putative type I restriction enzyme MjaVIIIP endonuclease subunit, found in Methanocaldococcus jannaschii (strain ATCC 43067 / DSM 2661 / JAL-1 / JCM 10045 / NBRC 100440) (Methanococcus jannaschii).